The chain runs to 248 residues: Transcriptional activator protein FnrL (248 aa).

The HTH crp-type domain occupies 154–232; the sequence is KTAREKIASL…KRHVIVTDFA (79 aa). Positions 191 to 210 form a DNA-binding region, H-T-H motif; sequence REEMADYLGLTLETVSRQVS.

Its function is as follows. Anaerobic regulatory protein; transcriptional activator of hemA. Appears to regulate other genes. This is Transcriptional activator protein FnrL (fnrL) from Cereibacter sphaeroides (strain ATCC 17023 / DSM 158 / JCM 6121 / CCUG 31486 / LMG 2827 / NBRC 12203 / NCIMB 8253 / ATH 2.4.1.) (Rhodobacter sphaeroides).